The sequence spans 274 residues: MSAPPRQKRLTPTTIAALKHQRPIVSLTAYTTPMARLMDAHCDLLLVGDSLGMVLYGLDTTVGVTLEMMIAHGQAVLRGVNRACVIIDMPFGSYQESREQAFRNAARIMKETGCDGIKLEGGTEMAETVAFLVERGIPVLGHVGLMPQQVNTSGGYRSKGHDEAEADKIRADATAIAKAGAFALVIEGTVEPLAREITQTLSVPTIGIGASPACDGQILVSDDMLGLFNDFKPRFVKHYAELAGVISKAVEDYATEVKARQFPGPEHTFQPRKS.

Mg(2+)-binding residues include Asp49 and Asp88. Residues Asp49–Ser50, Asp88, and Lys118 contribute to the 3-methyl-2-oxobutanoate site. A Mg(2+)-binding site is contributed by Glu120. Residue Glu187 is the Proton acceptor of the active site.

This sequence belongs to the PanB family. As to quaternary structure, homodecamer; pentamer of dimers. Requires Mg(2+) as cofactor.

Its subcellular location is the cytoplasm. The enzyme catalyses 3-methyl-2-oxobutanoate + (6R)-5,10-methylene-5,6,7,8-tetrahydrofolate + H2O = 2-dehydropantoate + (6S)-5,6,7,8-tetrahydrofolate. The protein operates within cofactor biosynthesis; (R)-pantothenate biosynthesis; (R)-pantoate from 3-methyl-2-oxobutanoate: step 1/2. Functionally, catalyzes the reversible reaction in which hydroxymethyl group from 5,10-methylenetetrahydrofolate is transferred onto alpha-ketoisovalerate to form ketopantoate. The sequence is that of 3-methyl-2-oxobutanoate hydroxymethyltransferase from Allorhizobium ampelinum (strain ATCC BAA-846 / DSM 112012 / S4) (Agrobacterium vitis (strain S4)).